Consider the following 286-residue polypeptide: Co-chaperone protein DjlA (286 aa).

The Periplasmic portion of the chain corresponds to Met-1–Lys-6. The chain crosses the membrane as a helical span at residues Ile-7–His-31. The Cytoplasmic portion of the chain corresponds to Leu-32–Lys-286. The J domain maps to Asp-220–Lys-286.

Homodimer.

The protein resides in the cell inner membrane. Regulatory DnaK co-chaperone. Direct interaction between DnaK and DjlA is needed for the induction of the wcaABCDE operon, involved in the synthesis of a colanic acid polysaccharide capsule, possibly through activation of the RcsB/RcsC phosphotransfer signaling pathway. The colanic acid capsule may help the bacterium survive conditions outside the host. In Haemophilus ducreyi (strain 35000HP / ATCC 700724), this protein is Co-chaperone protein DjlA.